Consider the following 632-residue polypeptide: 1-deoxy-D-xylulose-5-phosphate synthase (632 aa).

Thiamine diphosphate contacts are provided by residues His87 and 128–130 (GHS). Asp159 contributes to the Mg(2+) binding site. Thiamine diphosphate is bound by residues 160-161 (GA), Asn188, Phe295, and Glu377. Mg(2+) is bound at residue Asn188.

The protein belongs to the transketolase family. DXPS subfamily. In terms of assembly, homodimer. Mg(2+) is required as a cofactor. It depends on thiamine diphosphate as a cofactor.

It catalyses the reaction D-glyceraldehyde 3-phosphate + pyruvate + H(+) = 1-deoxy-D-xylulose 5-phosphate + CO2. It functions in the pathway metabolic intermediate biosynthesis; 1-deoxy-D-xylulose 5-phosphate biosynthesis; 1-deoxy-D-xylulose 5-phosphate from D-glyceraldehyde 3-phosphate and pyruvate: step 1/1. Its function is as follows. Catalyzes the acyloin condensation reaction between C atoms 2 and 3 of pyruvate and glyceraldehyde 3-phosphate to yield 1-deoxy-D-xylulose-5-phosphate (DXP). In Stutzerimonas stutzeri (strain A1501) (Pseudomonas stutzeri), this protein is 1-deoxy-D-xylulose-5-phosphate synthase.